Consider the following 211-residue polypeptide: ATP-dependent Clp protease proteolytic subunit (211 aa).

Residue Ser114 is the Nucleophile of the active site. The active site involves His139.

This sequence belongs to the peptidase S14 family. In terms of assembly, fourteen ClpP subunits assemble into 2 heptameric rings which stack back to back to give a disk-like structure with a central cavity, resembling the structure of eukaryotic proteasomes.

It is found in the cytoplasm. It carries out the reaction Hydrolysis of proteins to small peptides in the presence of ATP and magnesium. alpha-casein is the usual test substrate. In the absence of ATP, only oligopeptides shorter than five residues are hydrolyzed (such as succinyl-Leu-Tyr-|-NHMec, and Leu-Tyr-Leu-|-Tyr-Trp, in which cleavage of the -Tyr-|-Leu- and -Tyr-|-Trp bonds also occurs).. Cleaves peptides in various proteins in a process that requires ATP hydrolysis. Has a chymotrypsin-like activity. Plays a major role in the degradation of misfolded proteins. The protein is ATP-dependent Clp protease proteolytic subunit of Pseudomonas fluorescens (strain SBW25).